A 548-amino-acid chain; its full sequence is uncharacterized protein (548 aa).

Short-chain dehydrogenase/reductase stretches follow at residues Met1–Val250 and Pro271–Pro548. An NADP(+)-binding site is contributed by Ile12–Val37. Ser141 is a binding site for substrate. Catalysis depends on Tyr154, which acts as the Proton acceptor. Val280–Val304 serves as a coordination point for NADP(+). Tyr420 acts as the Proton acceptor in catalysis.

It belongs to the short-chain dehydrogenases/reductases (SDR) family.

This is an uncharacterized protein from Sinorhizobium fredii (strain NBRC 101917 / NGR234).